The following is a 345-amino-acid chain: MRVADFSFDLPDELIARYPMAQRNASRLLTLDGNSGALGDKQFTDLLGMINPGDLMVFNNTRVIPARMFGQKASGGKLEILVERMLDDKRILAHVRSSKSPKVDSFILLDGGYQMKMVARHDTLFELELLSELTILEVLEAVGHMPLPPYIDRPDEDADKERYQTVYNQNPGAVAAPTAGLHFDDAMLDALKAKDVNIAFVTLHVGAGTFQPVRVDTILEHKMHSEWANVPQDVVDLIAQTKAAGKRVVAVGTTSVRSLESAARASQGELKAFSGDTDIFIYPGYQFQVVDAMVTNFHLPESTLIMLVSAFAGFDHVMAAYQHAIAQKYRFFSYGDAMFVTKKAH.

The protein belongs to the QueA family. In terms of assembly, monomer.

It is found in the cytoplasm. The catalysed reaction is 7-aminomethyl-7-carbaguanosine(34) in tRNA + S-adenosyl-L-methionine = epoxyqueuosine(34) in tRNA + adenine + L-methionine + 2 H(+). The protein operates within tRNA modification; tRNA-queuosine biosynthesis. In terms of biological role, transfers and isomerizes the ribose moiety from AdoMet to the 7-aminomethyl group of 7-deazaguanine (preQ1-tRNA) to give epoxyqueuosine (oQ-tRNA). This chain is S-adenosylmethionine:tRNA ribosyltransferase-isomerase, found in Shewanella baltica (strain OS155 / ATCC BAA-1091).